The primary structure comprises 757 residues: Glutathione biosynthesis bifunctional protein GshAB (757 aa).

Residues 1 to 337 (MKIQHIIHEN…LGKARLAEVA (337 aa)) form a glutamate--cysteine ligase region. Residues 494-753 (KKVLQKAGFN…LTQNVIKMLF (260 aa)) enclose the ATP-grasp domain. An ATP-binding site is contributed by 521 to 580 (ALFENRAVVIKPKSTNYGLGITIFQQGVQNREDFAKALEIAFREDKEVMVEDYLVGTEYR). Mg(2+) contacts are provided by Asp702, Glu723, and Asn725. Residues Asp702, Glu723, and Asn725 each contribute to the Mn(2+) site.

In the N-terminal section; belongs to the glutamate--cysteine ligase type 1 family. Type 2 subfamily. In terms of assembly, monomer. It depends on Mg(2+) as a cofactor. Mn(2+) serves as cofactor.

It carries out the reaction L-cysteine + L-glutamate + ATP = gamma-L-glutamyl-L-cysteine + ADP + phosphate + H(+). The catalysed reaction is gamma-L-glutamyl-L-cysteine + glycine + ATP = glutathione + ADP + phosphate + H(+). Its pathway is sulfur metabolism; glutathione biosynthesis; glutathione from L-cysteine and L-glutamate: step 1/2. It functions in the pathway sulfur metabolism; glutathione biosynthesis; glutathione from L-cysteine and L-glutamate: step 2/2. Functionally, synthesizes glutathione from L-glutamate and L-cysteine via gamma-L-glutamyl-L-cysteine. The sequence is that of Glutathione biosynthesis bifunctional protein GshAB from Pasteurella multocida (strain Pm70).